A 541-amino-acid polypeptide reads, in one-letter code: Zinc finger protein 655 (541 aa).

Positions 1 to 22 (MEEVTSQEAAESPRGHFQPLEN) are disordered. 6 C2H2-type zinc fingers span residues 243-265 (YKCDTCGKTFHQASALTRHQRIH), 271-293 (YKCKECEKSFSQSSSLSRHKRIH), 334-356 (YKCGTCERVFSRSVHLTQHQRTH), 361-383 (CKCTVCGSDFCHTSYLVEHQRLH), 411-433 (YSCNECGKDFRLNSHLIQHQRIH), and 439-461 (HECNECGKSFSQTSCLIQHHKMH). The C2H2-type 7; degenerate zinc finger occupies 495–517 (FDCDAWEENFSQRAHLIQHERVH).

Belongs to the krueppel C2H2-type zinc-finger protein family. In terms of assembly, interacts with VAV1 and CDK4. Interacts with INTS13; promoting association with the integrator complex.

The protein resides in the nucleus. In terms of biological role, probable transcription factor. This chain is Zinc finger protein 655 (Znf655), found in Mus musculus (Mouse).